The chain runs to 327 residues: UPF0285 protein Maeo_0978 (327 aa).

It belongs to the UPF0285 family.

This is UPF0285 protein Maeo_0978 from Methanococcus aeolicus (strain ATCC BAA-1280 / DSM 17508 / OCM 812 / Nankai-3).